Consider the following 200-residue polypeptide: Probable GTP-binding protein EngB (200 aa).

In terms of domain architecture, EngB-type G spans 26–200 (SIPEIAIAGR…IYEIAQCIKK (175 aa)). Residues 34-41 (GRSNVGKS), 61-65 (GCTKQ), 80-83 (DLPG), 147-150 (TKID), and 179-181 (TSS) contribute to the GTP site. Mg(2+) is bound by residues serine 41 and threonine 63.

The protein belongs to the TRAFAC class TrmE-Era-EngA-EngB-Septin-like GTPase superfamily. EngB GTPase family. Mg(2+) is required as a cofactor.

Its function is as follows. Necessary for normal cell division and for the maintenance of normal septation. The protein is Probable GTP-binding protein EngB of Ehrlichia chaffeensis (strain ATCC CRL-10679 / Arkansas).